We begin with the raw amino-acid sequence, 198 residues long: MKEFIIKANKTVTNGEINLKDLPGSSGRLDLICRCVNSAFFLSHDLRRDTIFYSVLYGPPNPPIALQFVGNELKRVSPDERSIALFIKKALEKDASELWKESTSGIYSSKWEFRDIILKKKNEGKRIFYLHLNGKPLENFEFKNDEDFVFILGDHIGIGEEDEEFLEEIGAEKISLSPLELHADHCIILVHNILDKLK.

S-adenosyl-L-methionine contacts are provided by residues Leu130, Gly153, 176–181 (LSPLEL), and Cys186.

This sequence belongs to the methyltransferase superfamily. TrmY family. In terms of assembly, homodimer.

It localises to the cytoplasm. The catalysed reaction is pseudouridine(54) in tRNA + S-adenosyl-L-methionine = N(1)-methylpseudouridine(54) in tRNA + S-adenosyl-L-homocysteine + H(+). In terms of biological role, specifically catalyzes the N1-methylation of pseudouridine at position 54 (Psi54) in tRNAs. This chain is tRNA (pseudouridine(54)-N(1))-methyltransferase, found in Methanococcus maripaludis (strain C5 / ATCC BAA-1333).